Here is a 368-residue protein sequence, read N- to C-terminus: Probable dual-specificity RNA methyltransferase RlmN (368 aa).

Catalysis depends on Glu100, which acts as the Proton acceptor. The region spanning 106–344 (QHYGLSVCVT…CVVRQEHGTD (239 aa)) is the Radical SAM core domain. An intrachain disulfide couples Cys113 to Cys349. Residues Cys120, Cys124, and Cys127 each contribute to the [4Fe-4S] cluster site. S-adenosyl-L-methionine-binding positions include 172 to 173 (GE), Ser204, 227 to 229 (SLH), and Asn305. Cys349 serves as the catalytic S-methylcysteine intermediate.

This sequence belongs to the radical SAM superfamily. RlmN family. [4Fe-4S] cluster is required as a cofactor.

It is found in the cytoplasm. The catalysed reaction is adenosine(2503) in 23S rRNA + 2 reduced [2Fe-2S]-[ferredoxin] + 2 S-adenosyl-L-methionine = 2-methyladenosine(2503) in 23S rRNA + 5'-deoxyadenosine + L-methionine + 2 oxidized [2Fe-2S]-[ferredoxin] + S-adenosyl-L-homocysteine. The enzyme catalyses adenosine(37) in tRNA + 2 reduced [2Fe-2S]-[ferredoxin] + 2 S-adenosyl-L-methionine = 2-methyladenosine(37) in tRNA + 5'-deoxyadenosine + L-methionine + 2 oxidized [2Fe-2S]-[ferredoxin] + S-adenosyl-L-homocysteine. Functionally, specifically methylates position 2 of adenine 2503 in 23S rRNA and position 2 of adenine 37 in tRNAs. This is Probable dual-specificity RNA methyltransferase RlmN from Streptococcus agalactiae serotype V (strain ATCC BAA-611 / 2603 V/R).